A 485-amino-acid chain; its full sequence is ATP synthase subunit beta (485 aa).

170 to 177 (GGAGVGKT) lines the ATP pocket.

This sequence belongs to the ATPase alpha/beta chains family. As to quaternary structure, F-type ATPases have 2 components, CF(1) - the catalytic core - and CF(0) - the membrane proton channel. CF(1) has five subunits: alpha(3), beta(3), gamma(1), delta(1), epsilon(1). CF(0) has three main subunits: a(1), b(2) and c(9-12). The alpha and beta chains form an alternating ring which encloses part of the gamma chain. CF(1) is attached to CF(0) by a central stalk formed by the gamma and epsilon chains, while a peripheral stalk is formed by the delta and b chains.

The protein localises to the cell membrane. It carries out the reaction ATP + H2O + 4 H(+)(in) = ADP + phosphate + 5 H(+)(out). In terms of biological role, produces ATP from ADP in the presence of a proton gradient across the membrane. The catalytic sites are hosted primarily by the beta subunits. The chain is ATP synthase subunit beta from Salinispora arenicola (strain CNS-205).